We begin with the raw amino-acid sequence, 209 residues long: Non-structural protein 5 (209 aa).

Asp86 contacts Mg(2+).

This sequence belongs to the rotavirus NSP5 family. Homodimer. Interacts with VP1. Interacts with VP2. Interacts with NSP2 and NSP6. It depends on Mg(2+) as a cofactor. O-glycosylated.

It is found in the host cytoplasm. Functionally, plays an essential role in the viral genome replication. Participates, together with NSP2, in the formation of viral factories (viroplasms) which are large inclusions in the host cytoplasm where replication intermediates are assembled and viral RNA replication takes place. Orchestrates the recruitment of viroplasmic proteins such as capsid proteins to these factories. In Bos taurus (Bovine), this protein is Non-structural protein 5.